Consider the following 137-residue polypeptide: Small ribosomal subunit protein uS12 (137 aa).

Disordered stretches follow at residues 1 to 21 and 33 to 57; these read MPTI…KSDS and KVQT…TPKK.

It belongs to the universal ribosomal protein uS12 family. As to quaternary structure, part of the 30S ribosomal subunit. Contacts proteins S8 and S17. May interact with IF1 in the 30S initiation complex.

In terms of biological role, with S4 and S5 plays an important role in translational accuracy. Functionally, interacts with and stabilizes bases of the 16S rRNA that are involved in tRNA selection in the A site and with the mRNA backbone. Located at the interface of the 30S and 50S subunits, it traverses the body of the 30S subunit contacting proteins on the other side and probably holding the rRNA structure together. The combined cluster of proteins S8, S12 and S17 appears to hold together the shoulder and platform of the 30S subunit. This is Small ribosomal subunit protein uS12 from Streptococcus pyogenes serotype M1.